The chain runs to 120 residues: Large ribosomal subunit protein uL18 (120 aa).

This sequence belongs to the universal ribosomal protein uL18 family. In terms of assembly, part of the 50S ribosomal subunit; part of the 5S rRNA/L5/L18/L25 subcomplex. Contacts the 5S and 23S rRNAs.

Functionally, this is one of the proteins that bind and probably mediate the attachment of the 5S RNA into the large ribosomal subunit, where it forms part of the central protuberance. The polypeptide is Large ribosomal subunit protein uL18 (Hyphomonas neptunium (strain ATCC 15444)).